A 409-amino-acid polypeptide reads, in one-letter code: Probable plastid-lipid-associated protein 12, chloroplastic (409 aa).

The transit peptide at 1 to 55 (MVAVRFYAVEMSLPCLCPCPSSPISLSLCSPRFNLLNTTSRRLGLSRNCRTLRIS) directs the protein to the chloroplast.

This sequence belongs to the PAP/fibrillin family.

The protein localises to the plastid. It localises to the chloroplast thylakoid. The protein is Probable plastid-lipid-associated protein 12, chloroplastic (PAP12) of Arabidopsis thaliana (Mouse-ear cress).